A 121-amino-acid polypeptide reads, in one-letter code: Small ribosomal subunit protein uS13 (121 aa).

Positions 93–121 are disordered; the sequence is RNLPVRGQRTRTNARTCKGPRKSMNKQFK. The span at 110-121 shows a compositional bias: basic residues; it reads KGPRKSMNKQFK.

It belongs to the universal ribosomal protein uS13 family. Part of the 30S ribosomal subunit. Forms a loose heterodimer with protein S19. Forms two bridges to the 50S subunit in the 70S ribosome.

Its function is as follows. Located at the top of the head of the 30S subunit, it contacts several helices of the 16S rRNA. In the 70S ribosome it contacts the 23S rRNA (bridge B1a) and protein L5 of the 50S subunit (bridge B1b), connecting the 2 subunits; these bridges are implicated in subunit movement. Contacts the tRNAs in the A and P-sites. This is Small ribosomal subunit protein uS13 from Blochmanniella pennsylvanica (strain BPEN).